Reading from the N-terminus, the 283-residue chain is Protein/nucleic acid deglycase HchA (283 aa).

3 residues coordinate Zn(2+): His-86, Glu-91, and His-123. Cys-185 functions as the Nucleophile in the catalytic mechanism.

Belongs to the peptidase C56 family. HchA subfamily. As to quaternary structure, homodimer.

The protein localises to the cytoplasm. The enzyme catalyses N(omega)-(1-hydroxy-2-oxopropyl)-L-arginyl-[protein] + H2O = lactate + L-arginyl-[protein] + H(+). It catalyses the reaction N(6)-(1-hydroxy-2-oxopropyl)-L-lysyl-[protein] + H2O = lactate + L-lysyl-[protein] + H(+). The catalysed reaction is S-(1-hydroxy-2-oxopropyl)-L-cysteinyl-[protein] + H2O = lactate + L-cysteinyl-[protein] + H(+). It carries out the reaction N(omega)-(1-hydroxy-2-oxoethyl)-L-arginyl-[protein] + H2O = L-arginyl-[protein] + glycolate + H(+). The enzyme catalyses N(6)-(1-hydroxy-2-oxoethyl)-L-lysyl-[protein] + H2O = glycolate + L-lysyl-[protein] + H(+). It catalyses the reaction S-(1-hydroxy-2-oxoethyl)-L-cysteinyl-[protein] + H2O = glycolate + L-cysteinyl-[protein] + H(+). The catalysed reaction is N(2)-(1-hydroxy-2-oxopropyl)-dGTP + H2O = lactate + dGTP + H(+). It carries out the reaction N(2)-(1-hydroxy-2-oxopropyl)-GTP + H2O = lactate + GTP + H(+). The enzyme catalyses N(2)-(1-hydroxy-2-oxopropyl)-GDP + H2O = lactate + GDP + H(+). It catalyses the reaction N(2)-(1-hydroxy-2-oxopropyl)-GMP + H2O = lactate + GMP + H(+). The catalysed reaction is N(2)-(1-hydroxy-2-oxoethyl)-dGTP + H2O = dGTP + glycolate + H(+). It carries out the reaction N(2)-(1-hydroxy-2-oxoethyl)-GTP + H2O = glycolate + GTP + H(+). The enzyme catalyses N(2)-(1-hydroxy-2-oxoethyl)-GDP + H2O = glycolate + GDP + H(+). It catalyses the reaction N(2)-(1-hydroxy-2-oxoethyl)-GMP + H2O = glycolate + GMP + H(+). The catalysed reaction is an N(2)-(1-hydroxy-2-oxopropyl)-guanosine in RNA + H2O = a guanosine in RNA + lactate + H(+). It carries out the reaction an N(2)-(1-hydroxy-2-oxopropyl)-2'-deoxyguanosine in DNA + H2O = a 2'-deoxyguanosine in DNA + lactate + H(+). The enzyme catalyses an N(2)-(1-hydroxy-2-oxoethyl)-guanosine in RNA + H2O = a guanosine in RNA + glycolate + H(+). It catalyses the reaction an N(2)-(1-hydroxy-2-oxoethyl)-2'-deoxyguanosine in DNA + H2O = a 2'-deoxyguanosine in DNA + glycolate + H(+). Functionally, protein and nucleotide deglycase that catalyzes the deglycation of the Maillard adducts formed between amino groups of proteins or nucleotides and reactive carbonyl groups of glyoxals. Thus, functions as a protein deglycase that repairs methylglyoxal- and glyoxal-glycated proteins, and releases repaired proteins and lactate or glycolate, respectively. Deglycates cysteine, arginine and lysine residues in proteins, and thus reactivates these proteins by reversing glycation by glyoxals. Acts on early glycation intermediates (hemithioacetals and aminocarbinols), preventing the formation of Schiff bases and advanced glycation endproducts (AGE). Also functions as a nucleotide deglycase able to repair glycated guanine in the free nucleotide pool (GTP, GDP, GMP, dGTP) and in DNA and RNA. Is thus involved in a major nucleotide repair system named guanine glycation repair (GG repair), dedicated to reversing methylglyoxal and glyoxal damage via nucleotide sanitization and direct nucleic acid repair. Plays an important role in protecting cells from carbonyl stress. In Escherichia coli O8 (strain IAI1), this protein is Protein/nucleic acid deglycase HchA.